The primary structure comprises 428 residues: Glutamate-1-semialdehyde 2,1-aminomutase (428 aa).

An N6-(pyridoxal phosphate)lysine modification is found at Lys265.

It belongs to the class-III pyridoxal-phosphate-dependent aminotransferase family. HemL subfamily. As to quaternary structure, homodimer. The cofactor is pyridoxal 5'-phosphate.

It localises to the cytoplasm. The catalysed reaction is (S)-4-amino-5-oxopentanoate = 5-aminolevulinate. It functions in the pathway porphyrin-containing compound metabolism; protoporphyrin-IX biosynthesis; 5-aminolevulinate from L-glutamyl-tRNA(Glu): step 2/2. This is Glutamate-1-semialdehyde 2,1-aminomutase from Proteus mirabilis (strain HI4320).